Reading from the N-terminus, the 233-residue chain is uncharacterized protein (233 aa).

Transmembrane regions (helical) follow at residues 7–27 (VPIF…LLAY), 36–56 (YEFE…ILIP), 62–82 (MFVL…KYLA), 119–139 (LIIA…AILM), 159–179 (PLYP…VGLV), and 188–208 (ILLA…APHI).

Its subcellular location is the cell membrane. This is an uncharacterized protein from Methanocaldococcus jannaschii (strain ATCC 43067 / DSM 2661 / JAL-1 / JCM 10045 / NBRC 100440) (Methanococcus jannaschii).